A 343-amino-acid polypeptide reads, in one-letter code: Membrane progestin receptor delta (343 aa).

Residues Met1–Thr49 lie on the Cytoplasmic side of the membrane. Residues Val50–Gly70 form a helical membrane-spanning segment. Over Ser71–Tyr79 the chain is Extracellular. The helical transmembrane segment at His80 to Ala100 threads the bilayer. Residues His101–His112 are Cytoplasmic-facing. Residues Ile113 to Tyr133 traverse the membrane as a helical segment. The Extracellular segment spans residues Ala134–Arg146. The chain crosses the membrane as a helical span at residues Leu147 to Cys167. Residues Tyr168 to Asp216 are Cytoplasmic-facing. The helical transmembrane segment at Ala217–Ala237 threads the bilayer. At Ala238 to Gln257 the chain is on the extracellular side. The helical transmembrane segment at Leu258–Met278 threads the bilayer. The Cytoplasmic portion of the chain corresponds to Gly279 to Thr291. The helical transmembrane segment at Leu292–Ile312 threads the bilayer. Topologically, residues Ala313–Gln343 are extracellular.

Belongs to the ADIPOR family. In terms of assembly, homodimer.

It localises to the cell membrane. Plasma membrane progesterone (P4) receptor coupled to G proteins. Seems to act through a G(s) mediated pathway. Involved in neurosteroid inhibition of apoptosis. May be involved in regulating rapid P4 signaling in the nervous system. Also binds dehydroepiandrosterone (DHEA), pregnanolone, pregnenolone and allopregnanolone. This Mus musculus (Mouse) protein is Membrane progestin receptor delta.